We begin with the raw amino-acid sequence, 291 residues long: Beta-lactamase CTX-M-4 (291 aa).

Residues 1–28 (MMTQSIRRSMLTVMATLPLLFSSATLHA) form the signal peptide. Serine 73 functions as the Acyl-ester intermediate in the catalytic mechanism. 237–239 (KTG) is a substrate binding site.

It belongs to the class-A beta-lactamase family.

The enzyme catalyses a beta-lactam + H2O = a substituted beta-amino acid. Its function is as follows. Has cefotaxime-hydrolyzing activity. In Salmonella typhimurium, this protein is Beta-lactamase CTX-M-4 (bla).